Reading from the N-terminus, the 268-residue chain is MFGPILIFDSGIGGLSIFDEIRKVLPDQDCCYLFDNARLPYGELEESVLIKGCVELICEQALKIDASLVVVACNSASTLVLPGLRERLSIPIVGVVPAIKPAAKLSIARHIGLLATPGTIKRSYTRELIEQFADGCKVELFGSSELVMLAEAKLAGESVDLIKLRAQLEPIRQSKLDTLVLGCTHFPIIASEMQQILGNGVKLLDSGVAIAQRVVFLLNEFSLDKVVDNRTKNLTAIYTTAEISAGLTTRLAEKGFTKIVSRSSANLG.

Substrate is bound by residues 9–10 (DS) and 41–42 (YG). The Proton donor/acceptor role is filled by Cys73. 74–75 (NS) contacts substrate. The Proton donor/acceptor role is filled by Cys183. Residue 184–185 (TH) coordinates substrate.

This sequence belongs to the aspartate/glutamate racemases family.

It carries out the reaction L-glutamate = D-glutamate. The protein operates within cell wall biogenesis; peptidoglycan biosynthesis. Its function is as follows. Provides the (R)-glutamate required for cell wall biosynthesis. In Shewanella pealeana (strain ATCC 700345 / ANG-SQ1), this protein is Glutamate racemase.